The primary structure comprises 346 residues: Glucose-6-phosphatase 3 (346 aa).

Residues 1–25 (MESTLSAGIMMAEALQNQLPGLENM) lie on the Lumenal side of the membrane. A helical membrane pass occupies residues 26–46 (WLWVTFLADPKNLFQFYFPAV). Over 47–56 (YYASRRLGIS) the chain is Cytoplasmic. Residues 57–77 (LFWIAFITEWLNLVFKWFLFG) form a helical membrane-spanning segment. Residues 78–115 (DRPFWWVHESGYSAQTPVQIHQFPSSCETGPGSPSGHC) lie on the Lumenal side of the membrane. Substrate is bound at residue Arg-79. His-114 acts as the Proton donor in catalysis. The helical transmembrane segment at 116 to 135 (MITGAALWPVMIAISSQVAS) threads the bilayer. The Cytoplasmic segment spans residues 136 to 140 (QTRSP). A helical transmembrane segment spans residues 141–162 (WVRVIPGLAYCTFLLAVGLSRV). A substrate-binding site is contributed by Arg-161. The Lumenal segment spans residues 163-167 (FLLAH). His-167 (nucleophile) is an active-site residue. The helical transmembrane segment at 168-186 (FPHQVLAGLLAGVILGWLL) threads the bilayer. The Cytoplasmic portion of the chain corresponds to 187–197 (SPRVPMERELS). A helical transmembrane segment spans residues 198–218 (FYGLTALTLMLGASLMYWTLF). Topologically, residues 219–254 (TLGLDLSWSINLASKWCDRPEWVLVDSRPFASLSRD) are lumenal. Residues 255 to 273 (SGSALGLGIALHTPCYAQI) traverse the membrane as a helical segment. Residues 274 to 283 (RRVHLGNGQK) are Cytoplasmic-facing. Residues 284–304 (IACFVLAMGLLVFLEWLGHPP) form a helical membrane-spanning segment. Residues 305–307 (QIS) are Lumenal-facing. The helical transmembrane segment at 308–328 (LFYIFNFLKFTLWPCLVVALV) threads the bilayer. Topologically, residues 329–346 (PWMVHTLSAQEAPPIRSS) are cytoplasmic.

This sequence belongs to the glucose-6-phosphatase family. As to expression, expressed in liver and kidney. It is the major glucose-6-phosphatase expressed in the small intestine.

The protein resides in the endoplasmic reticulum membrane. It carries out the reaction D-glucose 6-phosphate + H2O = D-glucose + phosphate. The protein operates within carbohydrate biosynthesis; gluconeogenesis. With respect to regulation, inhibited by vanadate. Hydrolyzes glucose-6-phosphate to glucose in the endoplasmic reticulum. May form with the glucose-6-phosphate transporter (SLC37A4/G6PT) a ubiquitously expressed complex responsible for glucose production through glycogenolysis and gluconeogenesis. Probably required for normal neutrophil function. The protein is Glucose-6-phosphatase 3 (G6pc3) of Rattus norvegicus (Rat).